The following is a 645-amino-acid chain: Threonine--tRNA ligase (645 aa).

In terms of domain architecture, TGS spans 1–61; the sequence is MPAITLPDGS…SSDASVKFIT (61 aa). Residues 243 to 536 form a catalytic region; it reads DHRRIGREMD…LIEQYAGKFP (294 aa). The Zn(2+) site is built by cysteine 336, histidine 387, and histidine 513.

This sequence belongs to the class-II aminoacyl-tRNA synthetase family. Homodimer. It depends on Zn(2+) as a cofactor.

The protein localises to the cytoplasm. The enzyme catalyses tRNA(Thr) + L-threonine + ATP = L-threonyl-tRNA(Thr) + AMP + diphosphate + H(+). Functionally, catalyzes the attachment of threonine to tRNA(Thr) in a two-step reaction: L-threonine is first activated by ATP to form Thr-AMP and then transferred to the acceptor end of tRNA(Thr). Also edits incorrectly charged L-seryl-tRNA(Thr). The protein is Threonine--tRNA ligase of Gluconobacter oxydans (strain 621H) (Gluconobacter suboxydans).